Reading from the N-terminus, the 201-residue chain is Probable molybdenum cofactor guanylyltransferase (201 aa).

GTP is bound by residues 16–18 (LAG), Lys-28, Asp-75, and Asp-107. Residue Asp-107 coordinates Mg(2+).

The protein belongs to the MobA family. Mg(2+) serves as cofactor.

It is found in the cytoplasm. The catalysed reaction is Mo-molybdopterin + GTP + H(+) = Mo-molybdopterin guanine dinucleotide + diphosphate. In terms of biological role, transfers a GMP moiety from GTP to Mo-molybdopterin (Mo-MPT) cofactor (Moco or molybdenum cofactor) to form Mo-molybdopterin guanine dinucleotide (Mo-MGD) cofactor. In Mycobacterium bovis (strain ATCC BAA-935 / AF2122/97), this protein is Probable molybdenum cofactor guanylyltransferase.